Here is a 190-residue protein sequence, read N- to C-terminus: dCTP deaminase (190 aa).

DCTP is bound at residue 113-118 (KSTYAR). Glutamate 139 functions as the Proton donor/acceptor in the catalytic mechanism. Residues glutamine 158, tyrosine 172, lysine 181, and glutamine 182 each coordinate dCTP.

This sequence belongs to the dCTP deaminase family. In terms of assembly, homotrimer.

The catalysed reaction is dCTP + H2O + H(+) = dUTP + NH4(+). It functions in the pathway pyrimidine metabolism; dUMP biosynthesis; dUMP from dCTP (dUTP route): step 1/2. In terms of biological role, catalyzes the deamination of dCTP to dUTP. In Chlamydia trachomatis serovar L2 (strain ATCC VR-902B / DSM 19102 / 434/Bu), this protein is dCTP deaminase.